We begin with the raw amino-acid sequence, 347 residues long: Phospho-N-acetylmuramoyl-pentapeptide-transferase (347 aa).

A run of 10 helical transmembrane segments spans residues 10–30, 67–87, 91–111, 127–147, 164–184, 195–215, 220–240, 250–270, 275–295, and 325–345; these read SLVF…IFLG, AGGI…LPLG, TWLF…DDIV, FVLQ…IYKG, LGHS…AIVG, LDGL…VVAV, IPLA…SLAF, VFMG…CAVM, LLLI…ILQI, and VVKR…IAAL.

It belongs to the glycosyltransferase 4 family. MraY subfamily. The cofactor is Mg(2+).

The protein resides in the cell inner membrane. It catalyses the reaction UDP-N-acetyl-alpha-D-muramoyl-L-alanyl-gamma-D-glutamyl-meso-2,6-diaminopimeloyl-D-alanyl-D-alanine + di-trans,octa-cis-undecaprenyl phosphate = di-trans,octa-cis-undecaprenyl diphospho-N-acetyl-alpha-D-muramoyl-L-alanyl-D-glutamyl-meso-2,6-diaminopimeloyl-D-alanyl-D-alanine + UMP. It participates in cell wall biogenesis; peptidoglycan biosynthesis. Its function is as follows. Catalyzes the initial step of the lipid cycle reactions in the biosynthesis of the cell wall peptidoglycan: transfers peptidoglycan precursor phospho-MurNAc-pentapeptide from UDP-MurNAc-pentapeptide onto the lipid carrier undecaprenyl phosphate, yielding undecaprenyl-pyrophosphoryl-MurNAc-pentapeptide, known as lipid I. The sequence is that of Phospho-N-acetylmuramoyl-pentapeptide-transferase from Chlamydia abortus (strain DSM 27085 / S26/3) (Chlamydophila abortus).